Here is a 473-residue protein sequence, read N- to C-terminus: Sulfate adenylyltransferase subunit 1 (473 aa).

The 220-residue stretch at K19–E238 folds into the tr-type G domain. The segment at G28–S35 is G1. G28–S35 contributes to the GTP binding site. Positions G86–D90 are G2. The segment at D107 to G110 is G3. Residues D107–H111 and N162–D165 contribute to the GTP site. The tract at residues N162–D165 is G4. Positions S200–L202 are G5.

The protein belongs to the TRAFAC class translation factor GTPase superfamily. Classic translation factor GTPase family. CysN/NodQ subfamily. In terms of assembly, heterodimer composed of CysD, the smaller subunit, and CysN.

The enzyme catalyses sulfate + ATP + H(+) = adenosine 5'-phosphosulfate + diphosphate. It functions in the pathway sulfur metabolism; hydrogen sulfide biosynthesis; sulfite from sulfate: step 1/3. In terms of biological role, with CysD forms the ATP sulfurylase (ATPS) that catalyzes the adenylation of sulfate producing adenosine 5'-phosphosulfate (APS) and diphosphate, the first enzymatic step in sulfur assimilation pathway. APS synthesis involves the formation of a high-energy phosphoric-sulfuric acid anhydride bond driven by GTP hydrolysis by CysN coupled to ATP hydrolysis by CysD. This chain is Sulfate adenylyltransferase subunit 1, found in Buchnera aphidicola subsp. Acyrthosiphon pisum (strain APS) (Acyrthosiphon pisum symbiotic bacterium).